A 143-amino-acid chain; its full sequence is Large-conductance mechanosensitive channel (143 aa).

The next 2 helical transmembrane spans lie at 16 to 36 (VIDL…VTAL) and 84 to 104 (INTV…VKLI).

The protein belongs to the MscL family. In terms of assembly, homopentamer.

The protein localises to the cell inner membrane. Its function is as follows. Channel that opens in response to stretch forces in the membrane lipid bilayer. May participate in the regulation of osmotic pressure changes within the cell. This chain is Large-conductance mechanosensitive channel, found in Xanthomonas axonopodis pv. citri (strain 306).